Consider the following 335-residue polypeptide: DNA-directed RNA polymerase subunit alpha (335 aa).

Positions 1–233 (MQRNWRELIK…DQLTIFINFE (233 aa)) are alpha N-terminal domain (alpha-NTD). An alpha C-terminal domain (alpha-CTD) region spans residues 249–335 (FNDHLFRSVD…DIENRRKEQE (87 aa)).

It belongs to the RNA polymerase alpha chain family. As to quaternary structure, homodimer. The RNAP catalytic core consists of 2 alpha, 1 beta, 1 beta' and 1 omega subunit. When a sigma factor is associated with the core the holoenzyme is formed, which can initiate transcription.

The catalysed reaction is RNA(n) + a ribonucleoside 5'-triphosphate = RNA(n+1) + diphosphate. Functionally, DNA-dependent RNA polymerase catalyzes the transcription of DNA into RNA using the four ribonucleoside triphosphates as substrates. This is DNA-directed RNA polymerase subunit alpha from Syntrophobacter fumaroxidans (strain DSM 10017 / MPOB).